Reading from the N-terminus, the 1018-residue chain is Fibronectin-binding protein A (1018 aa).

Residues Met1 to Ala36 form the signal peptide. A YSIRK-G/S signaling motif motif is present at residues Tyr7 to Ser18. Residues Ala37–Asn511 form a ligand-binding A region region. 2 disordered regions span residues Ser38–Gln61 and Ala78–Thr195. Polar residues-rich tracts occupy residues Glu39–Gln61 and Ala78–Thr92. Residues Thr112–Val126 are compositionally biased toward basic and acidic residues. A compositionally biased stretch (polar residues) spans Thr129–Gln139. Residues Gly194–Asn511 are fibrinogen/elastin/tropoelastin-binding. A fibronectin-binding region spans residues Gly512–Thr872. The B-1 repeat unit spans residues Glu545–Ile574. The tract at residues Glu545–Ser604 is 2 X approximate tandem repeats. One copy of the B-2 repeat lies at Glu575 to Ser604. 3 disordered regions span residues Gly595–His622, Leu740–Phe813, and Glu827–Phe997. A D-1 repeat occupies Gly745–His782. The 4 X approximate tandem repeats stretch occupies residues Gly745 to Pro878. One copy of the D-2 repeat lies at Gly783–His820. Residues Gly821–Ser859 form a D-3 repeat. A compositionally biased stretch (basic and acidic residues) spans Glu827–Pro838. Residues Gly860 to Pro878 form a D-4; truncated repeat. Residues Pro875–Pro938 are compositionally biased toward pro residues. WR repeat units follow at residues Pro879 to Thr892, Pro893 to Thr906, Pro907 to Thr920, Pro921 to Lys934, and Pro935 to Lys948. Positions Pro879–Lys948 are 5 X tandem repeats, Pro-rich (WR). An LPXTG sorting signal motif is present at residues Leu982–Gly986. At Thr985 the chain carries Pentaglycyl murein peptidoglycan amidated threonine. Residues Gly986 to Ala1018 constitute a propeptide, removed by sortase.

Its subcellular location is the secreted. It is found in the cell wall. In terms of biological role, promotes bacterial attachment to multiple substrates, such as fibronectin (Fn), fibrinogen (Fg), elastin peptides and tropoelastin. This confers to S.aureus the ability to invade endothelial cells. Promotes adherence to and aggregation of activated platelets. The protein is Fibronectin-binding protein A of Staphylococcus aureus (strain USA300).